The following is a 606-amino-acid chain: Pentatricopeptide repeat-containing protein At1g31920 (606 aa).

PPR repeat units follow at residues 96 to 130, 131 to 165, 166 to 200, 201 to 227, 233 to 263, 268 to 298, 299 to 333, 334 to 368, and 370 to 404; these read CTFD…GNEP, DNFT…GLEA, DVFV…TAAS, WSSM…MCSE, EESG…LLRN, NIIV…MEKR, NNLT…GLEP, DHVV…GKVE, and TAEH…KNDV. Residues 405–480 are type E motif; that stretch reads IWRTFLSQCR…TPGFSIVELK (76 aa). The segment at 481 to 511 is type E(+) motif; sequence GKTHRFVSQDRSHPKCKEIYKMLHQMEWQLK. A type DYW motif region spans residues 512–606; that stretch reads FEGYSPDLTQ…GGTCSCKDYW (95 aa).

This sequence belongs to the PPR family. PCMP-H subfamily.

The polypeptide is Pentatricopeptide repeat-containing protein At1g31920 (PCMP-H11) (Arabidopsis thaliana (Mouse-ear cress)).